The primary structure comprises 1306 residues: Clustered mitochondria protein homolog (1306 aa).

Low complexity predominate over residues 1–11; that stretch reads MAVNNEVNNAA. Positions 1 to 47 are disordered; sequence MAVNNEVNNAASETPTDVSSSSQKLATEETALTNGADHEEEDGGEAG. Residues 12–33 show a composition bias toward polar residues; sequence SETPTDVSSSSQKLATEETALT. In terms of domain architecture, Clu spans 336 to 580; it reads DITRTQENYL…RVTPLDITWM (245 aa). Disordered stretches follow at residues 630–689 and 912–956; these read ERKR…QERI and KQSQ…SPAA. Over residues 656-689 the composition is skewed to basic and acidic residues; sequence EPAKSEEPTENGELAKKSESDEAAEPSKPDQERI. TPR repeat units lie at residues 1032 to 1065, 1074 to 1107, and 1116 to 1149; these read ARVYNSLSMLYYQLDEKEAAMELARKAVIVSERT, LLNYLNLGLIAHASGETKLALTYIKHALDLWKVV, and ITTINNAAVMLQHLKEYHDSRTWFEASLKICEEV. The disordered stretch occupies residues 1275-1306; that stretch reads FIEGSDQSNQNKKRPGRSNPKRRGGAAATAGK. Basic residues predominate over residues 1285-1298; sequence NKKRPGRSNPKRRG.

The protein belongs to the CLU family. As to quaternary structure, may associate with the eukaryotic translation initiation factor 3 (eIF-3) complex.

The protein resides in the cytoplasm. In terms of biological role, mRNA-binding protein involved in proper cytoplasmic distribution of mitochondria. The protein is Clustered mitochondria protein homolog of Botryotinia fuckeliana (strain B05.10) (Noble rot fungus).